The chain runs to 411 residues: Tyrosine--tRNA ligase (411 aa).

Tyrosine 34 contacts L-tyrosine. The 'HIGH' region motif lies at 39–48 (CTATSLHIGS). L-tyrosine-binding residues include tyrosine 171 and glutamine 175. The 'KMSKS' region signature appears at 231–235 (KMGKT). Lysine 234 provides a ligand contact to ATP. An S4 RNA-binding domain is found at 345-411 (ISAYKLFYNV…GKKRHILVKV (67 aa)).

Belongs to the class-I aminoacyl-tRNA synthetase family. TyrS type 1 subfamily. In terms of assembly, homodimer.

Its subcellular location is the cytoplasm. The catalysed reaction is tRNA(Tyr) + L-tyrosine + ATP = L-tyrosyl-tRNA(Tyr) + AMP + diphosphate + H(+). Catalyzes the attachment of tyrosine to tRNA(Tyr) in a two-step reaction: tyrosine is first activated by ATP to form Tyr-AMP and then transferred to the acceptor end of tRNA(Tyr). The chain is Tyrosine--tRNA ligase from Rickettsia typhi (strain ATCC VR-144 / Wilmington).